A 253-amino-acid chain; its full sequence is CD151 antigen (253 aa).

The Cytoplasmic portion of the chain corresponds to 1 to 18 (MGEFNEKKTTCGTVCLKY). 2 S-palmitoyl cysteine lipidation sites follow: Cys-11 and Cys-15. Residues 19–39 (LLFTYNCCFWLAGLAVMAVGI) form a helical membrane-spanning segment. Topologically, residues 40-57 (WTLALKSDYISLLASGTY) are extracellular. A helical transmembrane segment spans residues 58-78 (LATAYILVVAGTVVMVTGVLG). Over 79-91 (CCATFKERRNLLR) the chain is Cytoplasmic. Residues 92–112 (LYFILLLIIFLLEIIAGILAY) traverse the membrane as a helical segment. Residues 113 to 221 (AYYQQLNTEL…LETFIQEHLR (109 aa)) lie on the Extracellular side of the membrane. An N-linked (GlcNAc...) asparagine glycan is attached at Asn-159. A helical membrane pass occupies residues 222-242 (VIGAVGIGIACVQVFGMIFTC). 2 S-palmitoyl cysteine lipidation sites follow: Cys-242 and Cys-243. The Cytoplasmic segment spans residues 243–253 (CLYRSLKLEHY).

It belongs to the tetraspanin (TM4SF) family. In terms of assembly, interacts with integrins ITGA3:ITGB1, ITGA5:ITGB1, ITGA3:ITGB1 and ITGA6:ITGB4 and with CD9 and CD181. Interacts (via the second extracellular domain) with integrin ITGAV:ITGB3. Interacts with ITGA3; this interaction modulates ITGA3 glycosylation pattern. Interacts with F11R. Interacts with RAC1 and CDC42; these interactions mediate physical association of RAC1 and CDC42 with integrin adhesion receptor complexes. Palmitoylated. Palmitoylation by ZDHHC2 regulates CD151 expression, association with other tetraspanin family proteins and function in cell adhesion. Post-translationally, ubiquitinated by RNF128 on lysine residues present in the tetraspanin amino terminus via 'Lys-48'-linked ubiquitin leading to proteasomal degradation. As to expression, expressed in a variety of tissues including vascular endothelium and epidermis. Expressed on erythroid cells, with a higher level of expression in erythroid precursors than on mature erythrocytes. Acts as a sensitive T-cell activation marker.

It is found in the cell membrane. Its function is as follows. Structural component of specialized membrane microdomains known as tetraspanin-enriched microdomains (TERMs), which act as platforms for receptor clustering and signaling. Plays a role in various cellular and molecular mechanism through its association with both integrin and non-integrin proteins. These interactions facilitate critical cellular functions, including cell-to-cell communication, wound healing, platelet aggregation, trafficking, cell motility, and angiogenesis. Via interaction with JAM-A/F11R and integrin ITGA3:ITGB1, promotes the recruitment of signaling molecules such as RAC1, CDC42 and RhoGTPases to facilitate the polarization of epithelial cells and the reorganization of the actin cytoskeleton, which are critical steps in cell migration process. Regulates the glycosylation pattern of ITGA3:ITGB1 thereby modulating its activity. Plays an essential role in the maintenance of central laminin-binding integrin ITGA6:ITGB4-containing adhesion complexes. Essential for the proper assembly of the glomerular and tubular basement membranes in kidney. Contributes to T-cell activation by modulating integrin signaling leading to activation of downstream targets PTK2 and MAPK1/MAPK3. In terms of biological role, (Microbial infection) Plays a role in human papillomavirus 16/HPV-16 endocytosis upon binding to cell surface receptor. Functionally, (Microbial infection) Plays a role in human cytomegalovirus entry into host cell by contributing to entry receptor binding, membrane fusion, or release of the capsid. The sequence is that of CD151 antigen (CD151) from Homo sapiens (Human).